We begin with the raw amino-acid sequence, 448 residues long: Probable glucuronoxylan glucuronosyltransferase IRX7 (448 aa).

Residues 1–16 (MTTHKHRRTEKNLCFK) are Cytoplasmic-facing. A helical; Signal-anchor for type II membrane protein transmembrane segment spans residues 17–37 (QYYKWILCFILTLYFFASFFV). Over 38–448 (DHDQDHRSST…RSVRRSNSFL (411 aa)) the chain is Lumenal. N-linked (GlcNAc...) asparagine glycans are attached at residues asparagine 157, asparagine 189, asparagine 287, asparagine 397, and asparagine 438.

It belongs to the glycosyltransferase 47 family. Expressed in developing interfascicular fibers and xylem cells in stems and developing secondary xylem in roots.

The protein resides in the golgi apparatus membrane. In terms of biological role, involved in the synthesis of the hemicellulose glucuronoxylan, a major component of secondary cell walls. Probably involved in the synthesis of the glycosyl sequence at the glucuronoxylan reducing end. The protein is Probable glucuronoxylan glucuronosyltransferase IRX7 (IRX7) of Arabidopsis thaliana (Mouse-ear cress).